Consider the following 178-residue polypeptide: Large ribosomal subunit protein uL6 (178 aa).

Belongs to the universal ribosomal protein uL6 family. As to quaternary structure, part of the 50S ribosomal subunit.

This protein binds to the 23S rRNA, and is important in its secondary structure. It is located near the subunit interface in the base of the L7/L12 stalk, and near the tRNA binding site of the peptidyltransferase center. This chain is Large ribosomal subunit protein uL6, found in Ligilactobacillus salivarius (strain UCC118) (Lactobacillus salivarius).